The sequence spans 364 residues: Dual-specificity RNA methyltransferase RlmN (364 aa).

Glu91 functions as the Proton acceptor in the catalytic mechanism. One can recognise a Radical SAM core domain in the interval 97–333; sequence ESDRGTLCIS…VTVRKTRGDD (237 aa). A disulfide bond links Cys104 and Cys338. Residues Cys111, Cys115, and Cys118 each coordinate [4Fe-4S] cluster. S-adenosyl-L-methionine is bound by residues 164–165, Ser196, 218–220, and Asn295; these read GE and SLH. The active-site S-methylcysteine intermediate is the Cys338.

This sequence belongs to the radical SAM superfamily. RlmN family. The cofactor is [4Fe-4S] cluster.

The protein localises to the cytoplasm. It catalyses the reaction adenosine(2503) in 23S rRNA + 2 reduced [2Fe-2S]-[ferredoxin] + 2 S-adenosyl-L-methionine = 2-methyladenosine(2503) in 23S rRNA + 5'-deoxyadenosine + L-methionine + 2 oxidized [2Fe-2S]-[ferredoxin] + S-adenosyl-L-homocysteine. It carries out the reaction adenosine(37) in tRNA + 2 reduced [2Fe-2S]-[ferredoxin] + 2 S-adenosyl-L-methionine = 2-methyladenosine(37) in tRNA + 5'-deoxyadenosine + L-methionine + 2 oxidized [2Fe-2S]-[ferredoxin] + S-adenosyl-L-homocysteine. Functionally, specifically methylates position 2 of adenine 2503 in 23S rRNA and position 2 of adenine 37 in tRNAs. m2A2503 modification seems to play a crucial role in the proofreading step occurring at the peptidyl transferase center and thus would serve to optimize ribosomal fidelity. In Neisseria meningitidis serogroup A / serotype 4A (strain DSM 15465 / Z2491), this protein is Dual-specificity RNA methyltransferase RlmN.